Here is a 256-residue protein sequence, read N- to C-terminus: Phosphonates import ATP-binding protein PhnC (256 aa).

Residues 7-251 form the ABC transporter domain; it reads IEMKNVTKVY…VFDNIYNGGK (245 aa). 40–47 is an ATP binding site; the sequence is GLSGAGKS.

It belongs to the ABC transporter superfamily. Phosphonates importer (TC 3.A.1.9.1) family. In terms of assembly, the complex is composed of two ATP-binding proteins (PhnC), two transmembrane proteins (PhnE) and a solute-binding protein (PhnD).

The protein localises to the cell membrane. It carries out the reaction phosphonate(out) + ATP + H2O = phosphonate(in) + ADP + phosphate + H(+). Its function is as follows. Part of the ABC transporter complex PhnCDE involved in phosphonates import. Responsible for energy coupling to the transport system. The chain is Phosphonates import ATP-binding protein PhnC from Lactobacillus delbrueckii subsp. bulgaricus (strain ATCC 11842 / DSM 20081 / BCRC 10696 / JCM 1002 / NBRC 13953 / NCIMB 11778 / NCTC 12712 / WDCM 00102 / Lb 14).